The following is a 751-amino-acid chain: Pyridoxal-dependent decarboxylase domain-containing protein 1 (751 aa).

The segment at 659–751 is disordered; it reads QMRKEDSPDS…QEAESVETIR (93 aa). The segment covering 690 to 702 has biased composition (polar residues); that stretch reads DSISETSSVSQLE. Basic and acidic residues predominate over residues 720-729; the sequence is PQERPAHILE. The segment covering 742-751 has biased composition (acidic residues); that stretch reads QEAESVETIR.

The protein belongs to the group II decarboxylase family. It depends on pyridoxal 5'-phosphate as a cofactor.

The chain is Pyridoxal-dependent decarboxylase domain-containing protein 1 (pdxdc1) from Danio rerio (Zebrafish).